The primary structure comprises 215 residues: Protein-L-isoaspartate O-methyltransferase 1 (215 aa).

S61 is a catalytic residue.

It belongs to the methyltransferase superfamily. L-isoaspartyl/D-aspartyl protein methyltransferase family.

Its subcellular location is the cytoplasm. It catalyses the reaction [protein]-L-isoaspartate + S-adenosyl-L-methionine = [protein]-L-isoaspartate alpha-methyl ester + S-adenosyl-L-homocysteine. Catalyzes the methyl esterification of L-isoaspartyl residues in peptides and proteins that result from spontaneous decomposition of normal L-aspartyl and L-asparaginyl residues. It plays a role in the repair and/or degradation of damaged proteins. In Pelobacter propionicus (strain DSM 2379 / NBRC 103807 / OttBd1), this protein is Protein-L-isoaspartate O-methyltransferase 1.